Consider the following 439-residue polypeptide: Acyl-coenzyme A thioesterase 9, mitochondrial (439 aa).

The N-terminal 21 residues, 1-21 (MRRAALRLCALGKGQLTPGRG), are a transit peptide targeting the mitochondrion. HotDog ACOT-type domains are found at residues 84–209 (KDSY…RDSE) and 289–401 (ENSK…EKEV). Lysine 103 carries the post-translational modification N6-acetyllysine.

Belongs to the acyl coenzyme A hydrolase family. Interacts with NYAP1, NYAP2 and MYO16.

Its subcellular location is the mitochondrion. The protein resides in the mitochondrion matrix. The protein localises to the mitochondrion inner membrane. It carries out the reaction butanoyl-CoA + H2O = butanoate + CoA + H(+). The enzyme catalyses propanoyl-CoA + H2O = propanoate + CoA + H(+). It catalyses the reaction hexadecanoyl-CoA + H2O = hexadecanoate + CoA + H(+). The catalysed reaction is octanoyl-CoA + H2O = octanoate + CoA + H(+). It carries out the reaction decanoyl-CoA + H2O = decanoate + CoA + H(+). The enzyme catalyses tetradecanoyl-CoA + H2O = tetradecanoate + CoA + H(+). It catalyses the reaction 4,8-dimethylnonanoyl-CoA + H2O = 4,8-dimethylnonanoate + CoA + H(+). The catalysed reaction is 3-methylbutanoyl-CoA + H2O = 3-methylbutanoate + CoA + H(+). It carries out the reaction 2-methylpropanoyl-CoA + H2O = 2-methylpropanoate + CoA + H(+). It participates in lipid metabolism; fatty acid metabolism. Its activity is regulated as follows. Strongly inhibited by NADH and CoA. In terms of biological role, mitochondrial acyl-CoA thioesterase. Catalyzes the hydrolysis of acyl-CoAs into free fatty acids and coenzyme A (CoA), regulating their respective intracellular levels. Regulates both mitochondrial lipid and amino acid metabolism. This is Acyl-coenzyme A thioesterase 9, mitochondrial from Homo sapiens (Human).